Reading from the N-terminus, the 1434-residue chain is DNA-directed RNA polymerase subunit beta' (1434 aa).

The Zn(2+) site is built by Cys-70, Cys-72, Cys-85, and Cys-88. Mg(2+) is bound by residues Asp-460, Asp-462, and Asp-464. Residues Cys-840, Cys-915, Cys-922, and Cys-925 each contribute to the Zn(2+) site.

The protein belongs to the RNA polymerase beta' chain family. In terms of assembly, the RNAP catalytic core consists of 2 alpha, 1 beta, 1 beta' and 1 omega subunit. When a sigma factor is associated with the core the holoenzyme is formed, which can initiate transcription. Mg(2+) is required as a cofactor. Requires Zn(2+) as cofactor.

It catalyses the reaction RNA(n) + a ribonucleoside 5'-triphosphate = RNA(n+1) + diphosphate. In terms of biological role, DNA-dependent RNA polymerase catalyzes the transcription of DNA into RNA using the four ribonucleoside triphosphates as substrates. This Aeromonas hydrophila subsp. hydrophila (strain ATCC 7966 / DSM 30187 / BCRC 13018 / CCUG 14551 / JCM 1027 / KCTC 2358 / NCIMB 9240 / NCTC 8049) protein is DNA-directed RNA polymerase subunit beta'.